Reading from the N-terminus, the 461-residue chain is Isthmin-1 (461 aa).

Positions 1–26 (MVRLAAELLLLLGLLLLTLHITVLRS) are cleaved as a signal peptide. The N-linked (GlcNAc...) asparagine glycan is linked to Asn33. A compositionally biased stretch (polar residues) spans 40-58 (QDSRVAENNVNADSSSSVQ). Disordered stretches follow at residues 40–62 (QDSRVAENNVNADSSSSVQLGPG), 73–92 (ASQPWAQSPGTGGSLQRDGP), and 128–188 (EGSE…NFLK). The span at 131 to 141 (EPEKGMRKENK) shows a compositional bias: basic and acidic residues. Residues 156-165 (SSSSSSSSVS) show a composition bias toward low complexity. One can recognise a TSP type-1 domain in the interval 215-259 (DGEGDWSAWSPCSVSCGNGNQKRTRSCGYACTATESRTCDMPSCP). 3 disulfides stabilise this stretch: Cys226/Cys253, Cys230/Cys258, and Cys241/Cys245. Asn282 carries an N-linked (GlcNAc...) asparagine glycan. Positions 286-449 (LFGVDTDSCE…QKCAENPQDE (164 aa)) constitute an AMOP domain.

It belongs to the isthmin family.

Its subcellular location is the secreted. Functionally, may specifically influence certain angiogenesis process. This Danio rerio (Zebrafish) protein is Isthmin-1 (ism1).